A 296-amino-acid polypeptide reads, in one-letter code: HTH-type transcriptional regulator IlvR (296 aa).

Positions 1–58 (MDIRQFRHFAAVAETLHFGRAAERLGITQPPLSQSIQALEKALGAPLFARTKRHVELT) constitute an HTH lysR-type domain. The segment at residues 18 to 37 (FGRAAERLGITQPPLSQSIQ) is a DNA-binding region (H-T-H motif).

It belongs to the LysR transcriptional regulatory family.

Its function is as follows. Positively regulates the expression of the ilvD gene while negatively autoregulating its own expression. The chain is HTH-type transcriptional regulator IlvR (ilvR) from Caulobacter vibrioides (strain ATCC 19089 / CIP 103742 / CB 15) (Caulobacter crescentus).